We begin with the raw amino-acid sequence, 209 residues long: MAEFSLDKSHIAGVVLAGGRSQRMGRDKAGVMLGAESLLRHALTRLSQQALHVAVNADAAAEDVPVVPDRFPGKAGPMAGIHAAMVYAADLPSITHVVTVSVDCPFFPADLVARLAAAIEHPSQIAIAASEGRSHPVFGLWPVTLAADLEAWIATDEKRRVRDFLLRHDVTEVAFPLHPTRASLLDPFFNINTPDDLVEAERWLEALRA.

GTP contacts are provided by residues 16-18 (LAG), Lys-28, Asn-56, Asp-69, and Asp-103. Asp-103 contacts Mg(2+).

It belongs to the MobA family. As to quaternary structure, monomer. The cofactor is Mg(2+).

The protein localises to the cytoplasm. The catalysed reaction is Mo-molybdopterin + GTP + H(+) = Mo-molybdopterin guanine dinucleotide + diphosphate. Functionally, transfers a GMP moiety from GTP to Mo-molybdopterin (Mo-MPT) cofactor (Moco or molybdenum cofactor) to form Mo-molybdopterin guanine dinucleotide (Mo-MGD) cofactor. The chain is Molybdenum cofactor guanylyltransferase from Rhizobium johnstonii (strain DSM 114642 / LMG 32736 / 3841) (Rhizobium leguminosarum bv. viciae).